The sequence spans 338 residues: Nuclear hormone receptor family member nhr-52 (338 aa).

The segment at residues methionine 1–glutamine 75 is a DNA-binding region (nuclear receptor). 2 consecutive NR C4-type zinc fingers follow at residues cysteine 3–cysteine 23 and cysteine 39–cysteine 63. Residues lysine 98–arginine 337 enclose the NR LBD domain.

It belongs to the nuclear hormone receptor family.

It localises to the nucleus. Orphan nuclear receptor. The sequence is that of Nuclear hormone receptor family member nhr-52 (nhr-52) from Caenorhabditis elegans.